The following is a 439-amino-acid chain: Probable glycine dehydrogenase (decarboxylating) subunit 1 (439 aa).

This sequence belongs to the GcvP family. N-terminal subunit subfamily. In terms of assembly, the glycine cleavage system is composed of four proteins: P, T, L and H. In this organism, the P 'protein' is a heterodimer of two subunits.

The catalysed reaction is N(6)-[(R)-lipoyl]-L-lysyl-[glycine-cleavage complex H protein] + glycine + H(+) = N(6)-[(R)-S(8)-aminomethyldihydrolipoyl]-L-lysyl-[glycine-cleavage complex H protein] + CO2. Functionally, the glycine cleavage system catalyzes the degradation of glycine. The P protein binds the alpha-amino group of glycine through its pyridoxal phosphate cofactor; CO(2) is released and the remaining methylamine moiety is then transferred to the lipoamide cofactor of the H protein. This chain is Probable glycine dehydrogenase (decarboxylating) subunit 1, found in Aquifex aeolicus (strain VF5).